The sequence spans 134 residues: Holo-[acyl-carrier-protein] synthase (134 aa).

Mg(2+)-binding residues include Asp-8 and Glu-57.

The protein belongs to the P-Pant transferase superfamily. AcpS family. Mg(2+) serves as cofactor.

The protein localises to the cytoplasm. It catalyses the reaction apo-[ACP] + CoA = holo-[ACP] + adenosine 3',5'-bisphosphate + H(+). Its function is as follows. Transfers the 4'-phosphopantetheine moiety from coenzyme A to a Ser of acyl-carrier-protein. In Rhizobium johnstonii (strain DSM 114642 / LMG 32736 / 3841) (Rhizobium leguminosarum bv. viciae), this protein is Holo-[acyl-carrier-protein] synthase.